Consider the following 421-residue polypeptide: Imidazolonepropionase (421 aa).

Fe(3+)-binding residues include histidine 81 and histidine 83. Zn(2+) contacts are provided by histidine 81 and histidine 83. 4-imidazolone-5-propanoate is bound by residues arginine 90, tyrosine 153, and histidine 186. Residue tyrosine 153 coordinates N-formimidoyl-L-glutamate. Histidine 251 contributes to the Fe(3+) binding site. Histidine 251 is a binding site for Zn(2+). Glutamate 254 is a binding site for 4-imidazolone-5-propanoate. Aspartate 326 lines the Fe(3+) pocket. Position 326 (aspartate 326) interacts with Zn(2+). Residues asparagine 328 and glycine 330 each contribute to the N-formimidoyl-L-glutamate site. Serine 331 serves as a coordination point for 4-imidazolone-5-propanoate.

It belongs to the metallo-dependent hydrolases superfamily. HutI family. Zn(2+) is required as a cofactor. The cofactor is Fe(3+).

It is found in the cytoplasm. It catalyses the reaction 4-imidazolone-5-propanoate + H2O = N-formimidoyl-L-glutamate. The protein operates within amino-acid degradation; L-histidine degradation into L-glutamate; N-formimidoyl-L-glutamate from L-histidine: step 3/3. In terms of biological role, catalyzes the hydrolytic cleavage of the carbon-nitrogen bond in imidazolone-5-propanoate to yield N-formimidoyl-L-glutamate. It is the third step in the universal histidine degradation pathway. The chain is Imidazolonepropionase from Streptococcus gordonii (strain Challis / ATCC 35105 / BCRC 15272 / CH1 / DL1 / V288).